We begin with the raw amino-acid sequence, 266 residues long: Integral membrane protein 2B (266 aa).

Topologically, residues 1–54 are cytoplasmic; it reads MVKVTFNSALAQKEAKKXEPKSGEEALIIPPDTXAVDCKDPDEVVPVGQRRAWC. A helical; Signal-anchor for type II membrane protein membrane pass occupies residues 55–75; that stretch reads WCMCFGLAFMLAGVILGGAYL. The Lumenal segment spans residues 76–266; that stretch reads YKYFALQPDD…KFAVETLICS (191 aa). The interval 102 to 134 is necessary for interaction with APP and inhibitor effects on APP processing; the sequence is EPPANAPAARYQTIEENIKIFEEDGVEFISVPV. Positions 137 to 231 constitute a BRICHOS domain; it reads FADSDPANIV…LCHDKETYKL (95 aa). Intrachain disulfides connect cysteine 164/cysteine 223 and cysteine 248/cysteine 265. The N-linked (GlcNAc...) asparagine glycan is linked to asparagine 170.

It belongs to the ITM2 family. Homodimer; disulfide-linked. Interacts with SPPL2A and SPPL2B. Interacts with APP. Mature BRI2 (mBRI2) interacts with the APP amyloid-beta A4 protein; the interaction occurs at the cell surface and in the endocytic compartments and enable alpha- and beta-secretase-induced APP cleavage inhibition. Mature BRI2 (mBRI2) interacts with the APP C99; the interaction occurs in the endocytic compartments and enable gamma-secretase-induced C99 cleavage inhibition. May form heterodimers with Bri23 peptide and APP amyloid-beta protein 40. Interacts with ADAM7 in sperm; the interaction increases following capacitation. In terms of processing, the ectodomain C-terminal part of the imBRI2 is processed by furin producing a secreted Bri23 peptide and a mature BRI2, membrane form (mBRI2). The remaining part of the ectodomain of mBRI2 containing the BRICHOS domain is cleaved by ADAM10 and is secreted (BRI2C, soluble form). The membrane-bound N-terminal fragment (BRI2C, membrane form) is further proteolytically processed by SPPL2A and SPPL2B through regulated intramembrane proteolysis producing a secreted C-peptide and a BRI2 intracellular domain (BRI2 ICD) released in the cytosol. Shedding by ADAM10 facilitates intramembrane cleavage but is not absolutely required for BRI2 ICD generation. Glycosylation at Asn-170 is important for cell surface localization, but doesn't affect furin- and ADAM10-induced proteolytic processing.

It localises to the golgi apparatus membrane. The protein localises to the cell membrane. It is found in the endosome membrane. The protein resides in the secreted. In terms of biological role, plays a regulatory role in the processing of the amyloid-beta A4 precursor protein (APP) and acts as an inhibitor of the amyloid-beta peptide aggregation and fibrils deposition. Plays a role in the induction of neurite outgrowth. Functions as a protease inhibitor by blocking access of secretases to APP cleavage sites. Mature BRI2 (mBRI2) functions as a modulator of the amyloid-beta A4 precursor protein (APP) processing leading to a strong reduction in the secretion of secretase-processed amyloid-beta protein 40 and amyloid-beta protein 42. Its function is as follows. Bri23 peptide prevents aggregation of APP amyloid-beta protein 42 into toxic oligomers. This Sus scrofa (Pig) protein is Integral membrane protein 2B (ITM2B).